Here is a 239-residue protein sequence, read N- to C-terminus: Mitochondrial fission factor homolog B (239 aa).

At 1-219 the chain is on the cytoplasmic side; that stretch reads MAEINRMQYE…ENKERVKHEM (219 aa). The segment at 107–139 is disordered; it reads EGPAPATPHSKEVRSSGHLKRDGLASENSLRQN. Basic and acidic residues predominate over residues 115–130; the sequence is HSKEVRSSGHLKRDGL. Residues 184 to 214 are a coiled coil; it reads DLALADAASLRRQIIKLNRRLLLLEEENKER. A helical; Anchor for type IV membrane protein membrane pass occupies residues 220–237; sequence TMYSIIIIFGLLNSWLWF. Topologically, residues 238–239 are extracellular; the sequence is RR.

The protein belongs to the Tango11 family.

The protein localises to the mitochondrion outer membrane. The protein resides in the peroxisome. In terms of biological role, plays a role in mitochondrial and peroxisomal fission. Promotes the recruitment and association of the fission mediator dynamin-related protein 1 (DNM1L) to the mitochondrial surface. The polypeptide is Mitochondrial fission factor homolog B (mff-b) (Xenopus laevis (African clawed frog)).